Here is a 358-residue protein sequence, read N- to C-terminus: Chondroadherin (358 aa).

An N-terminal signal peptide occupies residues 1–20 (MARALLFSLVFLAILLPALA). Residues 21-50 (ACPQNCHCHGDLQHVICDKVGLQKIPKVSE) enclose the LRRNT domain. A disulfide bond links Cys-22 and Cys-37. 10 LRR repeats span residues 51-72 (TTKL…SFRT), 75-96 (NLVS…AFRG), 99-120 (QLIY…AFDD), 123-144 (ELTY…LLSP), 147-168 (NLFI…AFQG), 171-192 (DLRW…SLDD), 195-216 (NLAK…ALSK), 219-240 (VVEE…AFQS), 244-265 (YLET…AFSG), and 268-289 (TLKH…FPFD). Ser-143 carries O-linked (GalNAc...) serine glycosylation. An LRRCT domain is found at 299–347 (NPWKCTCQLRGLRRWLEAKASRPDATCSSPAKFKGQRIRDTDALRSCKS). 2 disulfide bridges follow: Cys-303/Cys-345 and Cys-305/Cys-325. The tract at residues 322-358 (DATCSSPAKFKGQRIRDTDALRSCKSPTKRSKKAGRH) is disordered. A compositionally biased stretch (basic residues) spans 348–358 (PTKRSKKAGRH).

This sequence belongs to the small leucine-rich proteoglycan (SLRP) family. SLRP class IV subfamily. As to quaternary structure, mostly monomeric. Interacts with collagen type II. As to expression, cartilage.

Its subcellular location is the secreted. It is found in the extracellular space. The protein localises to the extracellular matrix. In terms of biological role, promotes attachment of chondrocytes, fibroblasts, and osteoblasts. This binding is mediated (at least for chondrocytes and fibroblasts) by the integrin alpha(2)beta(1). May play an important role in the regulation of chondrocyte growth and proliferation. This is Chondroadherin (Chad) from Mus musculus (Mouse).